We begin with the raw amino-acid sequence, 246 residues long: MTIPLLSYAPSSQNQRVAGYEVPNEETPWRYSLEDAVDQSDIDELIWAAYRQVFSEHVVLKSTRQPHLESQLANRAISVRDFIRGLAKSETFRRLVVETNSNYRLVEIALKRLLGRAPYNKQEELAWSIRIATDGWQKFVDTLVDSDEYTQNFGDNTVPYQRRRYKDRPFNLVTPRYSDYWRDKLENSRYKWGDIRNFLEMARSVKVTPVQFKPVSTANVQIPDTTRRDRPTVPASINPTASFPLR.

The PBS-linker domain occupies serine 11–arginine 189. Residues aspartate 224–arginine 246 form a disordered region. Polar residues predominate over residues alanine 235–arginine 246.

This sequence belongs to the phycobilisome linker protein family. In terms of assembly, the phycobilisome is a hemidiscoidal structure that is composed of two distinct substructures: a core complex and a number of rods radiating from the core.

The protein resides in the cellular thylakoid membrane. Its function is as follows. Rod-core linker protein required for attachment of phycocyanin to allophycocyanin in cores of phycobilisomes. Functionally, linker polypeptides determine the state of aggregation and the location of the disk-shaped phycobiliprotein units within the phycobilisome and modulate their spectroscopic properties in order to mediate a directed and optimal energy transfer. This is Phycobilisome rod-core linker polypeptide CpcG2 (cpcG2) from Thermosynechococcus vestitus (strain NIES-2133 / IAM M-273 / BP-1).